The chain runs to 331 residues: Ketol-acid reductoisomerase (NADP(+)) (331 aa).

A KARI N-terminal Rossmann domain is found at Ala-2–Thr-182. NADP(+)-binding positions include Tyr-25–Gln-28, Ser-51, Ser-53, and Asp-83–Gln-86. His-108 is an active-site residue. Residue Gly-134 participates in NADP(+) binding. The KARI C-terminal knotted domain maps to Asn-183–Leu-328. Mg(2+) contacts are provided by Asp-191, Glu-195, Glu-227, and Glu-231. Residue Ser-252 coordinates substrate.

Belongs to the ketol-acid reductoisomerase family. The cofactor is Mg(2+).

The catalysed reaction is (2R)-2,3-dihydroxy-3-methylbutanoate + NADP(+) = (2S)-2-acetolactate + NADPH + H(+). The enzyme catalyses (2R,3R)-2,3-dihydroxy-3-methylpentanoate + NADP(+) = (S)-2-ethyl-2-hydroxy-3-oxobutanoate + NADPH + H(+). It participates in amino-acid biosynthesis; L-isoleucine biosynthesis; L-isoleucine from 2-oxobutanoate: step 2/4. Its pathway is amino-acid biosynthesis; L-valine biosynthesis; L-valine from pyruvate: step 2/4. Involved in the biosynthesis of branched-chain amino acids (BCAA). Catalyzes an alkyl-migration followed by a ketol-acid reduction of (S)-2-acetolactate (S2AL) to yield (R)-2,3-dihydroxy-isovalerate. In the isomerase reaction, S2AL is rearranged via a Mg-dependent methyl migration to produce 3-hydroxy-3-methyl-2-ketobutyrate (HMKB). In the reductase reaction, this 2-ketoacid undergoes a metal-dependent reduction by NADPH to yield (R)-2,3-dihydroxy-isovalerate. In Prochlorococcus marinus (strain NATL2A), this protein is Ketol-acid reductoisomerase (NADP(+)).